The primary structure comprises 543 residues: Allantoate permease (543 aa).

Over 1-80 (MSADASTNSN…PEEDRKLRWK (80 aa)) the chain is Cytoplasmic. Residues 81-97 (IDYCMFPLMCILYAVQF) form a helical membrane-spanning segment. Over 98 to 123 (MDKISTSSAAVMGLRTDLKMHGDQYS) the chain is Extracellular. A helical membrane pass occupies residues 124-145 (WVTSAFYFGYLFMNLGPVQFIF). The Cytoplasmic segment spans residues 146 to 154 (QRTSHMSKM). Residues 155–171 (LAVFIVIWGMLLALHAA) traverse the membrane as a helical segment. Over 172 to 178 (PTVKYPS) the chain is Extracellular. The chain crosses the membrane as a helical span at residues 179–200 (FIVLRVLLGCAESVVTPCFTII). The Cytoplasmic portion of the chain corresponds to 201–213 (TAQYWKTEEQFTR). The chain crosses the membrane as a helical span at residues 214-237 (VSIWFGMNGLGSILINAIAYGVYI). The Extracellular segment spans residues 238–248 (HQDSYAIKGWR). A helical membrane pass occupies residues 249–269 (TLFVITGVITIFIGILIFLWI). The Cytoplasmic portion of the chain corresponds to 270–317 (PDDPSKARFLSKREKLMVVQRIRSNQQGFGNHEIKKYQIIEALKDVRT). Residues 318-342 (WLYFLFTVSSNIPNGGISSFMSILL) form a helical membrane-spanning segment. Topologically, residues 343-352 (NSDFGYSSKE) are extracellular. Residues 353-377 (TLLMGLPTGAVELVGCPLFGILAVY) form a helical membrane-spanning segment. Residues 378–389 (AANKKIPFWKYK) are Cytoplasmic-facing. A helical transmembrane segment spans residues 390–411 (LSWAIFAAVLALIASCMLGFAT). Residues 412-417 (NSKKAR) are Extracellular-facing. The chain crosses the membrane as a helical span at residues 418 to 435 (LAGAYLWYISPVSFICVL). The Cytoplasmic segment spans residues 436–453 (SNISANSSGYSKKWTVSS). A helical transmembrane segment spans residues 454–472 (INLVAYAAANLAGPQTFIA). Over 473-482 (KQAPKYHGAK) the chain is Extracellular. The helical transmembrane segment at 483–504 (VAMVVCYAVMIVLLSILLIVNL) threads the bilayer. Residues 505 to 543 (RENKRRDKIAAERGFPEETENLEFSDLTDFENPNFRYTL) are Cytoplasmic-facing.

The protein belongs to the major facilitator superfamily. Allantoate permease family.

The protein localises to the membrane. Its function is as follows. Component of the allantoate transport system. The polypeptide is Allantoate permease (DAL5) (Saccharomyces cerevisiae (strain ATCC 204508 / S288c) (Baker's yeast)).